The chain runs to 180 residues: Large ribosomal subunit protein uL5 (180 aa).

Belongs to the universal ribosomal protein uL5 family. Part of the 50S ribosomal subunit; part of the 5S rRNA/L5/L18/L25 subcomplex. Contacts the 5S rRNA and the P site tRNA. Forms a bridge to the 30S subunit in the 70S ribosome.

Functionally, this is one of the proteins that bind and probably mediate the attachment of the 5S RNA into the large ribosomal subunit, where it forms part of the central protuberance. In the 70S ribosome it contacts protein S13 of the 30S subunit (bridge B1b), connecting the 2 subunits; this bridge is implicated in subunit movement. Contacts the P site tRNA; the 5S rRNA and some of its associated proteins might help stabilize positioning of ribosome-bound tRNAs. The polypeptide is Large ribosomal subunit protein uL5 (Clostridium botulinum (strain Loch Maree / Type A3)).